Reading from the N-terminus, the 396-residue chain is S-adenosylmethionine synthase (396 aa).

Histidine 16 is an ATP binding site. Mg(2+) is bound at residue aspartate 18. A K(+)-binding site is contributed by glutamate 44. Glutamate 57 and glutamine 100 together coordinate L-methionine. A flexible loop region spans residues glutamine 100 to asparagine 110. Residues aspartate 162–lysine 164, arginine 228–phenylalanine 229, aspartate 237, arginine 243–lysine 244, alanine 260, and lysine 264 each bind ATP. Aspartate 237 provides a ligand contact to L-methionine. L-methionine is bound at residue lysine 268.

The protein belongs to the AdoMet synthase family. As to quaternary structure, homotetramer; dimer of dimers. Mg(2+) is required as a cofactor. Requires K(+) as cofactor.

It is found in the cytoplasm. The enzyme catalyses L-methionine + ATP + H2O = S-adenosyl-L-methionine + phosphate + diphosphate. It participates in amino-acid biosynthesis; S-adenosyl-L-methionine biosynthesis; S-adenosyl-L-methionine from L-methionine: step 1/1. Its function is as follows. Catalyzes the formation of S-adenosylmethionine (AdoMet) from methionine and ATP. The overall synthetic reaction is composed of two sequential steps, AdoMet formation and the subsequent tripolyphosphate hydrolysis which occurs prior to release of AdoMet from the enzyme. This is S-adenosylmethionine synthase from Myxococcus xanthus (strain DK1622).